Reading from the N-terminus, the 201-residue chain is ATP-dependent Clp protease proteolytic subunit 1 (201 aa).

The Nucleophile role is filled by Ser102. His127 is a catalytic residue.

This sequence belongs to the peptidase S14 family. Fourteen ClpP subunits assemble into 2 heptameric rings which stack back to back to give a disk-like structure with a central cavity, resembling the structure of eukaryotic proteasomes.

The protein resides in the cytoplasm. The enzyme catalyses Hydrolysis of proteins to small peptides in the presence of ATP and magnesium. alpha-casein is the usual test substrate. In the absence of ATP, only oligopeptides shorter than five residues are hydrolyzed (such as succinyl-Leu-Tyr-|-NHMec, and Leu-Tyr-Leu-|-Tyr-Trp, in which cleavage of the -Tyr-|-Leu- and -Tyr-|-Trp bonds also occurs).. Its function is as follows. Cleaves peptides in various proteins in a process that requires ATP hydrolysis. Has a chymotrypsin-like activity. Plays a major role in the degradation of misfolded proteins. This Mesorhizobium japonicum (strain LMG 29417 / CECT 9101 / MAFF 303099) (Mesorhizobium loti (strain MAFF 303099)) protein is ATP-dependent Clp protease proteolytic subunit 1.